The primary structure comprises 435 residues: Adenylosuccinate synthetase (435 aa).

Residues 20–26 (GDEGKGK) and 48–50 (GHT) each bind GTP. The active-site Proton acceptor is aspartate 21. The Mg(2+) site is built by aspartate 21 and glycine 48. Residues 21–24 (DEGK), 46–49 (NAGH), threonine 134, arginine 148, glutamine 229, threonine 244, and arginine 308 contribute to the IMP site. Histidine 49 functions as the Proton donor in the catalytic mechanism. 304-310 (TTTGRPR) provides a ligand contact to substrate. Residues arginine 310, 336 to 338 (KVD), and 422 to 424 (SMG) each bind GTP.

This sequence belongs to the adenylosuccinate synthetase family. In terms of assembly, homodimer. Mg(2+) serves as cofactor.

The protein localises to the cytoplasm. The enzyme catalyses IMP + L-aspartate + GTP = N(6)-(1,2-dicarboxyethyl)-AMP + GDP + phosphate + 2 H(+). It functions in the pathway purine metabolism; AMP biosynthesis via de novo pathway; AMP from IMP: step 1/2. In terms of biological role, plays an important role in the de novo pathway of purine nucleotide biosynthesis. Catalyzes the first committed step in the biosynthesis of AMP from IMP. The sequence is that of Adenylosuccinate synthetase from Thermoplasma acidophilum (strain ATCC 25905 / DSM 1728 / JCM 9062 / NBRC 15155 / AMRC-C165).